The sequence spans 1126 residues: Probable serine/threonine-protein kinase DDB_G0280111 (1126 aa).

A Protein kinase domain is found at 16-295 (LNFVKQIAEG…NLLRNQQPLF (280 aa)). ATP contacts are provided by residues 22-30 (IAEGGFSYV) and K45. The active-site Proton acceptor is the D147. A compositionally biased stretch (low complexity) spans 314–333 (NNNNNINNNNNNNIVNGKNI). Disordered regions lie at residues 314–469 (NNNN…NGNN), 760–901 (LNLN…QQQQ), 944–1072 (TPSS…DEVR), and 1095–1126 (NKQS…GLLN). Pro residues predominate over residues 347 to 364 (TPTPPPPAPSQSPSPSPS). Residues 367-390 (VVNNIENNSNGLEHSNSNGNISQP) show a composition bias toward polar residues. Composition is skewed to low complexity over residues 413–422 (PPNNSNNSFD), 432–469 (NLSN…NGNN), and 760–795 (LNLN…LNSS). 2 stretches are compositionally biased toward polar residues: residues 796 to 825 (FDNI…SESG) and 833 to 845 (EPTS…YQQS). The segment covering 846–856 (NNNNNNNNNNN) has biased composition (low complexity). Polar residues predominate over residues 857 to 866 (GTPISLTPGS). Composition is skewed to low complexity over residues 886–901 (QQQQ…QQQQ), 953–971 (PSTG…QQSQ), and 1003–1035 (NVNI…NPNL). The span at 1095–1105 (NKQSRMNNPNN) shows a compositional bias: polar residues. Acidic residues predominate over residues 1108-1126 (DEGDSGFGDGEEEDEGLLN).

Belongs to the protein kinase superfamily. Ser/Thr protein kinase family.

The catalysed reaction is L-seryl-[protein] + ATP = O-phospho-L-seryl-[protein] + ADP + H(+). It carries out the reaction L-threonyl-[protein] + ATP = O-phospho-L-threonyl-[protein] + ADP + H(+). This Dictyostelium discoideum (Social amoeba) protein is Probable serine/threonine-protein kinase DDB_G0280111.